Consider the following 351-residue polypeptide: Uroporphyrinogen decarboxylase (351 aa).

Substrate-binding positions include 32 to 36 (RQAGR), Phe-51, Asp-82, Tyr-157, Ser-211, and His-326.

This sequence belongs to the uroporphyrinogen decarboxylase family. Homodimer.

Its subcellular location is the cytoplasm. The catalysed reaction is uroporphyrinogen III + 4 H(+) = coproporphyrinogen III + 4 CO2. The protein operates within porphyrin-containing compound metabolism; protoporphyrin-IX biosynthesis; coproporphyrinogen-III from 5-aminolevulinate: step 4/4. In terms of biological role, catalyzes the decarboxylation of four acetate groups of uroporphyrinogen III to yield coproporphyrinogen III. This Caulobacter vibrioides (strain ATCC 19089 / CIP 103742 / CB 15) (Caulobacter crescentus) protein is Uroporphyrinogen decarboxylase.